The sequence spans 31 residues: Cyclotide mech-5 (31 aa).

A cross-link (cyclopeptide (Gly-Asp)) is located at residues 1 to 31 (GVIPCGESCVFIPCISSVVGCTCKNKVCYRD). 3 cysteine pairs are disulfide-bonded: Cys-5/Cys-21, Cys-9/Cys-23, and Cys-14/Cys-28.

This is a cyclic peptide. In terms of processing, contains 3 disulfide bonds.

In terms of biological role, probably participates in a plant defense mechanism (Potential). Binds to and induces leakage in phospholipd membranes, particularly ones containing 1-palmitoyl-2-oleophosphatidylethanolamine (POPE). The protein is Cyclotide mech-5 of Melicytus chathamicus (Chatham Island mahoe).